The following is a 3595-amino-acid chain: Replicase polyprotein 1ab (3595 aa).

Residues 3–23 (CECPRSNLVVMCSGAFCCVLC) form a C4-type; atypical zinc finger. Positions 56 to 164 (SGLEGRYCAL…PTTIPFNTTG (109 aa)) constitute a Peptidase C31 domain. Catalysis depends on for Nsp1-alpha papain-like cysteine proteinase activity residues Cys-63 and His-130. Residues 239-350 (LSFEHGRCWL…LKLPGKTYFG (112 aa)) form the Peptidase C32 domain. Catalysis depends on for Nsp1-beta papain-like cysteine proteinase activity residues Cys-246 and His-309. Catalysis depends on for Nsp2 cysteine proteinase activity residues Cys-378 and His-430. A disordered region spans residues 482-527 (RRGGGKKSGQSSGVRAPGRTTPDLAGDWGKAVDDQEKTASKVTTDK). Residues 511-520 (KAVDDQEKTA) are compositionally biased toward basic and acidic residues. The region spanning 633-736 (TFIPPPDGGC…HGWCSSLLSE (104 aa)) is the Peptidase C33 domain. The tract at residues 808 to 862 (QVRTVDPSQPAAPLPPVPRPRKRKAAAQQVSKVPSEQDPSLAHDPPEKPDSVRPP) is disordered. The segment covering 851–860 (DPPEKPDSVR) has biased composition (basic and acidic residues). A run of 7 helical transmembrane segments spans residues 922-942 (MFFLFLGSPLFILCAVLAGVI), 951-971 (ILCCCLVVVYICTLFADAISS), 1019-1039 (VALFPLHLLLLMVDVLLVIGV), 1239-1259 (IFRTALAAAWVLFFVCAGYWV), 1316-1336 (PYIVLAACLVYLASVYVPGII), 1345-1365 (ALLPAGPAISALRTLVMIIAA), and 1381-1401 (AFVDFTSVVVVLTALLVGWIL). The tract at residues 922–1039 (MFFLFLGSPL…MVDVLLVIGV (118 aa)) is HD1. Positions 1239 to 1399 (IFRTALAAAW…VVLTALLVGW (161 aa)) are HD2. The Peptidase S32 domain occupies 1464–1664 (GLLREKTRAS…RLLESSINLE (201 aa)). Active-site charge relay system; for 3C-like serine proteinase activity residues include His-1502, Asp-1527, and Ser-1580. The next 4 membrane-spanning stretches (helical) occupy residues 1673-1693 (IIVAVVLWKYAVDPLSIPFVV), 1711-1731 (YNYSLFCLAAFSPLASRIFFI), 1744-1764 (ALICHACFAGIAVLNDFIILG), and 1784-1804 (AIAIAVIGALVCVAACCLELF). The segment at 1687-1804 (LSIPFVVAFF…CVAACCLELF (118 aa)) is HD3. Residues 2083-2253 (DMNRLRAIIS…YPYKLHPVRG (171 aa)) form the NiRAN domain. One can recognise a RdRp catalytic domain in the interval 2491 to 2625 (GRCLETDLAS…LNESDDLPNF (135 aa)). One can recognise an AV ZBD domain in the interval 2746 to 2812 (GKEVQVCSIC…IPILKDRTKF (67 aa)). Cys-2752, Cys-2755, Cys-2765, Cys-2770, Cys-2773, His-2777, His-2779, Cys-2782, Cys-2789, His-2791, Cys-2798, and Cys-2801 together coordinate Zn(2+). Residues 2862 to 3022 (DLPDGKYSMK…VFELMKKNAL (161 aa)) form the (+)RNA virus helicase ATP-binding domain. Residue 2897–2904 (GPPGSGKT) coordinates ATP. Residues 3023–3157 (HAIYRFGQNI…DGKARVMLSD (135 aa)) form the (+)RNA virus helicase C-terminal domain. The AV-Nsp11N/CoV-Nsp15M domain occupies 3196 to 3292 (SGSLSPLPRV…LTKFLDGRAV (97 aa)). In terms of domain architecture, NendoU spans 3294-3416 (MEDSVYSTGR…MVWRDQTMYF (123 aa)). Catalysis depends on residues His-3325, His-3340, and Lys-3369.

Belongs to the arteriviridae polyprotein family. In terms of processing, specific enzymatic cleavages in vivo by its own proteases yield mature proteins. There are two alternative pathways for processing. Either nsp4-5 is cleaved, which represents the major pathway or the nsp5-6 and nsp6-7 are processed, which represents the minor pathway. The major pathway occurs when nsp2 acts as a cofactor for nsp4.

The protein localises to the host membrane. It is found in the host cytoplasm. It localises to the host perinuclear region. It carries out the reaction RNA(n) + a ribonucleoside 5'-triphosphate = RNA(n+1) + diphosphate. The enzyme catalyses ATP + H2O = ADP + phosphate + H(+). The catalysed reaction is uridylyl-uridylyl-ribonucleotide-RNA = a 3'-end uridylyl-2',3'-cyclophospho-uridine-RNA + a 5'-end dephospho-ribonucleoside-RNA. Functionally, the replicase polyprotein 1ab is a multifunctional protein: it contains the activities necessary for the transcription of negative stranded RNA, leader RNA, subgenomic mRNAs and progeny virion RNA as well as proteinases responsible for the cleavage of the polyprotein into functional products. The Nsp1 chain is essential for viral subgenomic mRNA synthesis. In terms of biological role, the 3C-like serine proteinase chain is responsible for the majority of cleavages as it cleaves the C-terminus of the polyprotein. Its function is as follows. Plays a role in viral transcription/replication and prevents the simultaneous activation of host cell dsRNA sensors, such as MDA5/IFIH1, OAS, and PKR. Acts by degrading the 5'-polyuridines generated during replication of the poly(A) region of viral genomic and subgenomic RNAs. Catalyzes a two-step reaction in which a 2'3'-cyclic phosphate (2'3'-cP) is first generated by 2'-O transesterification, which is then hydrolyzed to a 3'-phosphate (3'-P). If not degraded, poly(U) RNA would hybridize with poly(A) RNA tails and activate host dsRNA sensors. Functionally, the helicase chain, which contains a zinc finger structure, displays RNA and DNA duplex-unwinding activities with 5' to 3' polarity. The chain is Replicase polyprotein 1ab (rep) from Simian hemorrhagic fever virus (SHFV).